The primary structure comprises 225 residues: Transcriptional activator protein CUP2 (225 aa).

Residues 1–40 (MVVINGVKYACETCIRGHRAAQCTHTDGPLQMIRRKGRPS) constitute a DNA-binding region (copper-fist). The tract at residues 1–108 (MVVINGVKYA…KSKGGSCHRR (108 aa)) is binds copper and DNA. Zn(2+) contacts are provided by Cys-11, Cys-14, Cys-23, and His-25. A required for transcriptional activation region spans residues 109 to 225 (ANDEAAHVNG…QVSSHNSHSQ (117 aa)).

The protein resides in the nucleus. Functionally, trans-acting regulatory protein that activates transcription of the CUP1 gene (metallothionein) in response to copper ions. Binds to the CUP1 UAS sequence 5'-GCTTCTTTTCCGCTGA-3'. Binds DNA only in presence of copper or silver. Copper seems to alter the conformation of the protein. This is Transcriptional activator protein CUP2 (CUP2) from Saccharomyces cerevisiae (strain ATCC 204508 / S288c) (Baker's yeast).